The primary structure comprises 215 residues: Probable transaldolase (215 aa).

Lys-83 acts as the Schiff-base intermediate with substrate in catalysis.

The protein belongs to the transaldolase family. Type 3B subfamily.

It localises to the cytoplasm. The enzyme catalyses D-sedoheptulose 7-phosphate + D-glyceraldehyde 3-phosphate = D-erythrose 4-phosphate + beta-D-fructose 6-phosphate. It functions in the pathway carbohydrate degradation; pentose phosphate pathway; D-glyceraldehyde 3-phosphate and beta-D-fructose 6-phosphate from D-ribose 5-phosphate and D-xylulose 5-phosphate (non-oxidative stage): step 2/3. Its function is as follows. Transaldolase is important for the balance of metabolites in the pentose-phosphate pathway. The protein is Probable transaldolase of Clostridium perfringens (strain 13 / Type A).